A 134-amino-acid chain; its full sequence is Profilin-4 (134 aa).

Cysteine 13 and cysteine 118 are joined by a disulfide. The Involved in PIP2 interaction signature appears at 84-100 (AVIRGKKGSGGITIKKT). Residue threonine 114 is modified to Phosphothreonine.

This sequence belongs to the profilin family. As to quaternary structure, occurs in many kinds of cells as a complex with monomeric actin in a 1:1 ratio. Phosphorylated by MAP kinases.

It is found in the cytoplasm. It localises to the cytoskeleton. Functionally, binds to actin and affects the structure of the cytoskeleton. At high concentrations, profilin prevents the polymerization of actin, whereas it enhances it at low concentrations. This Olea europaea (Common olive) protein is Profilin-4.